The chain runs to 338 residues: Glycerol-3-phosphate dehydrogenase [NAD(P)+] (338 aa).

Ser-13, Trp-14, and Lys-108 together coordinate NADPH. Lys-108, Gly-139, and Ser-141 together coordinate sn-glycerol 3-phosphate. Ala-143 provides a ligand contact to NADPH. Sn-glycerol 3-phosphate-binding residues include Lys-194, Asp-247, Ser-257, Arg-258, and Asn-259. The active-site Proton acceptor is the Lys-194. Arg-258 contributes to the NADPH binding site. Residues Val-282 and Glu-284 each coordinate NADPH.

It belongs to the NAD-dependent glycerol-3-phosphate dehydrogenase family.

It is found in the cytoplasm. The catalysed reaction is sn-glycerol 3-phosphate + NAD(+) = dihydroxyacetone phosphate + NADH + H(+). It catalyses the reaction sn-glycerol 3-phosphate + NADP(+) = dihydroxyacetone phosphate + NADPH + H(+). Its pathway is membrane lipid metabolism; glycerophospholipid metabolism. In terms of biological role, catalyzes the reduction of the glycolytic intermediate dihydroxyacetone phosphate (DHAP) to sn-glycerol 3-phosphate (G3P), the key precursor for phospholipid synthesis. This Listeria monocytogenes serotype 4b (strain CLIP80459) protein is Glycerol-3-phosphate dehydrogenase [NAD(P)+].